Here is a 227-residue protein sequence, read N- to C-terminus: Extracellular deoxyribonuclease (227 aa).

A signal peptide spans 1–20; that stretch reads MFRPLLSFTLARLVSLPLHA.

The protein belongs to the EndA/NucM nuclease family.

It is found in the secreted. This chain is Extracellular deoxyribonuclease, found in Aeromonas hydrophila.